Reading from the N-terminus, the 182-residue chain is RNA pyrophosphohydrolase (182 aa).

The Nudix hydrolase domain occupies 6–149 (GYRPNVGIIL…KRLVYEQALN (144 aa)). Residues 38-59 (GGIKRGETPEEAMFRELYEEVG) carry the Nudix box motif. The disordered stretch occupies residues 162–182 (PRHKKEQEPFSDVVDSVRSEE).

The protein belongs to the Nudix hydrolase family. RppH subfamily. A divalent metal cation serves as cofactor.

Its function is as follows. Accelerates the degradation of transcripts by removing pyrophosphate from the 5'-end of triphosphorylated RNA, leading to a more labile monophosphorylated state that can stimulate subsequent ribonuclease cleavage. The polypeptide is RNA pyrophosphohydrolase (Dechloromonas aromatica (strain RCB)).